A 449-amino-acid chain; its full sequence is UDP-N-acetylmuramoylalanine--D-glutamate ligase (449 aa).

113-119 provides a ligand contact to ATP; sequence GTNGKTT.

The protein belongs to the MurCDEF family.

It is found in the cytoplasm. The catalysed reaction is UDP-N-acetyl-alpha-D-muramoyl-L-alanine + D-glutamate + ATP = UDP-N-acetyl-alpha-D-muramoyl-L-alanyl-D-glutamate + ADP + phosphate + H(+). Its pathway is cell wall biogenesis; peptidoglycan biosynthesis. Its function is as follows. Cell wall formation. Catalyzes the addition of glutamate to the nucleotide precursor UDP-N-acetylmuramoyl-L-alanine (UMA). The sequence is that of UDP-N-acetylmuramoylalanine--D-glutamate ligase from Microcystis aeruginosa (strain NIES-843 / IAM M-2473).